The sequence spans 1763 residues: Genome polyprotein (1763 aa).

The region spanning 458 to 614 (DGVITSCNKR…ESHKRARPGT (157 aa)) is the SF3 helicase domain. Residue 484-491 (GPPGCGKT) coordinates ATP. Tyr984 bears the O-(5'-phospho-RNA)-tyrosine mark. In terms of domain architecture, Peptidase C24 spans 1073–1229 (GPGTKFHKNA…KLVVPYVHID (157 aa)). Residues His1110, Glu1131, and Cys1193 each act as for 3CLpro activity in the active site. One can recognise a RdRp catalytic domain in the interval 1478 to 1603 (AKVYAVDYSK…MFPTMFASIS (126 aa)).

In terms of assembly, protein p32: Homodimer. Interacts with NTPase, protein p30 and protease-polymerase p76. As to quaternary structure, interacts with capsid protein VP1 and protease-polymerase p76. Homooligomer. Interacts with Vpg, protein p32 and may interact with capsid protein VP1. Post-translationally, specific enzymatic cleavages in vivo yield mature proteins. Pro-Pol is first autocatalytically cleaved, then processes the whole polyprotein. VPg is uridylylated by the polymerase and is covalently attached to the 5'-end of the polyadenylated genomic and subgenomic RNAs. This uridylylated form acts as a nucleotide-peptide primer for the polymerase.

The enzyme catalyses a ribonucleoside 5'-triphosphate + H2O = a ribonucleoside 5'-diphosphate + phosphate + H(+). The catalysed reaction is RNA(n) + a ribonucleoside 5'-triphosphate = RNA(n+1) + diphosphate. It carries out the reaction Endopeptidase with a preference for cleavage when the P1 position is occupied by Glu-|-Xaa and the P1' position is occupied by Gly-|-Yaa.. Its function is as follows. NTPase presumably plays a role in replication. Despite having similarities with helicases, does not seem to display any helicase activity. In terms of biological role, viral genome-linked protein is covalently linked to the 5'-end of the positive-strand, negative-strand genomic RNAs and subgenomic RNA. Acts as a genome-linked replication primer. May recruit ribosome to viral RNA thereby promoting viral proteins translation. The protease activity processes the polyprotein: Pro-Pol is first released by autocleavage, then all other proteins are cleaved. Cleaves host translation initiation factor eIF4G1, eIF4G2 and PABP1 thereby inducing a shutdown of host protein synthesis. This shutdown may not prevent viral mRNA from being translated since viral Vpg replaces the cap. May cleave host polyadenylate-binding protein thereby inhibiting cellular translation. Seems to act as a RNase and degrades host Pol II-driven mRNAs with the help of host XRN1. Inhibits the integrated stress response (ISR) in the infected cell by cleaving host G3BP1 and G3BP2. Stress granule formation is thus inhibited, which allows protein synthesis and viral replication. The RNA-directed RNA polymerase activity replicates genomic and antigenomic viral RNA by recognizing specific signals. Also transcribes a subgenomic mRNA by initiating RNA synthesis internally on antigenomic RNA. This sgRNA codes for structural proteins. Catalyzes the covalent attachment VPg with viral RNAs. Functionally, selectively decays the mRNA of host interferon receptor IFNAR1. In Feline calicivirus (FCV), this protein is Genome polyprotein.